The sequence spans 351 residues: E3 ubiquitin-protein ligase TRIM63 (351 aa).

An RING-type zinc finger spans residues 23 to 79; the sequence is CPICLEMFTKPVVILPCQHNLCRKCANDIFQAANPYWTNRGGSVSMSGGRFRCPSCR. The interval 74–218 is interaction with TTN; the sequence is RCPSCRHEVI…LSHKFDALYA (145 aa). The B box-type zinc-finger motif lies at 117–159; that stretch reads GSHPMCKEHEDEKINIYCLTCEVPTCSLCKVFGAHQACEVAPL. 4 residues coordinate Zn(2+): Cys-122, His-125, Cys-145, and His-151. Positions 189-269 form a coiled coil; that stretch reads SQLEDSCRVT…VETAIQSLDE (81 aa). A COS domain is found at 267 to 325; it reads LDEPGGATFLLSAKPLIKSIVEASKGCQLGKTEQGFENMDYFTLNLEHIAEALRAIDFG. Residues 326-345 are compositionally biased toward acidic residues; sequence TDEEEEFTEEEEEEDQEEGV. The interval 326–351 is disordered; sequence TDEEEEFTEEEEEEDQEEGVSTEGHQ.

As to quaternary structure, homodimer. Homooligomer and heterooligomer. Interacts with SUMO2, titin/TTN and GMEB1. Interacts with TRIM54 and probably with TRIM55 and TNNI3. Forms a ternary complex with RACK1 and PRKCE. Interacts with CKM. As to expression, muscle specific. Selectively expressed in heart and skeletal muscle.

It localises to the cytoplasm. Its subcellular location is the nucleus. The protein localises to the myofibril. It is found in the sarcomere. The protein resides in the m line. It localises to the z line. The catalysed reaction is S-ubiquitinyl-[E2 ubiquitin-conjugating enzyme]-L-cysteine + [acceptor protein]-L-lysine = [E2 ubiquitin-conjugating enzyme]-L-cysteine + N(6)-ubiquitinyl-[acceptor protein]-L-lysine.. It participates in protein modification; protein ubiquitination. Functionally, E3 ubiquitin ligase. Mediates the ubiquitination and subsequent proteasomal degradation of CKM, GMEB1 and HIBADH. Regulates the proteasomal degradation of muscle proteins under amino acid starvation, where muscle protein is catabolized to provide other organs with amino acids. Inhibits de novo skeletal muscle protein synthesis under amino acid starvation. Regulates proteasomal degradation of cardiac troponin I/TNNI3 and probably of other sarcomeric-associated proteins. May play a role in striated muscle atrophy and hypertrophy by regulating an anti-hypertrophic PKC-mediated signaling pathway. May regulate the organization of myofibrils through TTN in muscle cells. The protein is E3 ubiquitin-protein ligase TRIM63 (Trim63) of Rattus norvegicus (Rat).